A 307-amino-acid chain; its full sequence is Protein ORANGE, chloroplastic (307 aa).

The N-terminal 55 residues, 1-55, are a transit peptide targeting the chloroplast; that stretch reads MSSLGRILSVSYPPDPYTWRFSQYKLSSSLGRNRRLRWRFTALDPESSSLDSESS. Lysine 58 is covalently cross-linked (Glycyl lysine isopeptide (Lys-Gly) (interchain with G-Cter in ubiquitin)). The next 2 helical transmembrane spans lie at 146 to 166 and 199 to 219; these read VYYA…GLLA and IVAS…VVEV. The CR-type-like stretch occupies residues 208-299; it reads VGVISALMVV…CTGMAMASEH (92 aa). A CXXCXGXG motif repeat occupies 230-237; the sequence is CKYCLGTG. The CXXCXXXG motif repeat unit spans residues 241-248; that stretch reads CARCSSTG. One copy of the CXXCXGXG motif repeat lies at 274–281; the sequence is CSNCSGAG. The stretch at 285–292 is one CXXCXXXG motif repeat; the sequence is CPTCLCTG.

It belongs to the orange-like family. Interacts with the phytoene synthase PSY1 in chloroplast. Binds to the eukaryotic release factor eRF1-2. Interacts with the transcription factor TCP14 in the nucleus to repress chloroplast biogenesis in etiolated seedlings. Associates to the E2 ubiquitin-conjugating enzyme UBC19. In terms of processing, ubiquitination at K-58 by UBC19 is essential for nuclear localization.

It localises to the plastid. Its subcellular location is the chloroplast membrane. The protein localises to the nucleus. The protein resides in the cytoplasm. Functionally, involved in chromoplast differentiation. Associated with a cellular process that triggers the differentiation of pro-plastids or other non-colored plastids into chromoplasts for carotenoid accumulation. Is associated with carotenoid accumulation in chromoplasts. Functions as a major regulator of the phytoene synthase PSY1 protein level and activity. Modulates carotenoid biosynthesis by means of post-transcriptional regulation of PSY1. Modulates carotenoid biosynthesis in part by up-regulating a series of endogenous carotenogenic genes. Regulates cell elongation in the petiole in an eRF1-2-dependent manner. Binds to and represses TCP14 transactivation activity, thus preventing early light-induced proteins (ELIPs, e.g. ELIP1 and ELIP2) expression and delaying chloroplast biogenesis (e.g. lower chlorophyll biosynthesis and slower development of thylakoid membranes) in germinating cotyledons and etiolated seedlings; reduced levels upon illumination combined to TCP14 accumulation derepress chloroplast biogenesis during deetiolation. This is Protein ORANGE, chloroplastic from Arabidopsis thaliana (Mouse-ear cress).